The chain runs to 457 residues: Putative movement protein (457 aa).

Disordered regions lie at residues 265-284 (SGSRNLGRRKPQRGRPLERS), 293-312 (FRSQDERVEHQGLSTDSDFE), and 345-457 (ARQD…PPSV). A compositionally biased stretch (gly residues) spans 411–426 (RAGGGEIHGGSEGGGV). The segment covering 448-457 (YKQHDLPPSV) has biased composition (basic and acidic residues).

The protein belongs to the tobamoviruses movement protein family.

Its function is as follows. Suppressor of viral-induced RNA silencing. The polypeptide is Putative movement protein (Crataegus (hawthorn)).